Here is a 148-residue protein sequence, read N- to C-terminus: Hut operon positive regulatory protein (148 aa).

Belongs to the HutP family. As to quaternary structure, homohexamer.

Its function is as follows. Antiterminator that binds to cis-acting regulatory sequences on the mRNA in the presence of histidine, thereby suppressing transcription termination and activating the hut operon for histidine utilization. In Bacillus velezensis (strain DSM 23117 / BGSC 10A6 / LMG 26770 / FZB42) (Bacillus amyloliquefaciens subsp. plantarum), this protein is Hut operon positive regulatory protein.